Reading from the N-terminus, the 615-residue chain is Envelope glycoprotein (615 aa).

A signal peptide spans M1 to W84. At A85 to R378 the chain is on the extracellular side. 6 N-linked (GlcNAc...) asparagine; by host glycosylation sites follow: N108, N127, N178, N219, N275, and N319. A helical membrane pass occupies residues G379–V402. Over S403–P615 the chain is Cytoplasmic. 2 coiled-coil regions span residues A411 to K461 and I495 to N531. Residues Y590–M593 form a required for cell transformation region.

As to quaternary structure, interacts with sheep HYAL2 receptor.

It localises to the virion membrane. The envelope proteins induce cell transformation leading to ovine pulmonary adenocarcinoma (OPA), a contagious lung cancer of sheep and goat. They bind to the HYAL2 receptor for cell entry. Env proteins probably do not act as oncogenes by themselves, but may rather liberate an oncogenic factor that would normally be negatively regulated. One mechanism of transformation seems to involve activation of the phosphoinositide-3-OH kinase (PI3K)/Akt pathway but does not involve the virus receptor HYAL2, and the other seems to involve Env binding to HYAL2, HYAL2 degradation, and activation of the MST1R receptor tyrosine kinase, which is normally suppressed by HYAL2. The chain is Envelope glycoprotein (env) from Ovis aries (Sheep).